The chain runs to 164 residues: MPKQVVEVLVEGGKATPGPPLGPAIGPLGLNVKQVVDKINEATKDFAGMQVPVKIIVDPVTKQFEIEVGVPPTSQLIKKELGLEKGSGEPKHNIVGNLTMEQVIKIAKMKKDQMLALTLKAAAKEVIGTALSMGVTVEGKDPREVQKEIDEGVYDELFEKAEKE.

It belongs to the universal ribosomal protein uL11 family. Part of the ribosomal stalk of the 50S ribosomal subunit. Interacts with L10 and the large rRNA to form the base of the stalk. L10 forms an elongated spine to which L12 dimers bind in a sequential fashion forming a multimeric L10(L12)X complex.

Forms part of the ribosomal stalk which helps the ribosome interact with GTP-bound translation factors. The protein is Large ribosomal subunit protein uL11 of Pyrococcus furiosus (strain ATCC 43587 / DSM 3638 / JCM 8422 / Vc1).